Here is a 292-residue protein sequence, read N- to C-terminus: 2-(5''-triphosphoribosyl)-3'-dephosphocoenzyme-A synthase (292 aa).

Belongs to the CitG/MdcB family.

It catalyses the reaction 3'-dephospho-CoA + ATP = 2'-(5''-triphospho-alpha-D-ribosyl)-3'-dephospho-CoA + adenine. Its function is as follows. Catalyzes the formation of 2-(5''-triphosphoribosyl)-3'-dephosphocoenzyme-A, the precursor of the prosthetic group of the holo-acyl carrier protein (gamma chain) of citrate lyase, from ATP and dephospho-CoA. This is 2-(5''-triphosphoribosyl)-3'-dephosphocoenzyme-A synthase from Escherichia coli O139:H28 (strain E24377A / ETEC).